Here is a 416-residue protein sequence, read N- to C-terminus: RNA-editing ligase 2, mitochondrial (416 aa).

Residues 1–17 constitute a mitochondrion transit peptide; that stretch reads MLRRLGVRHFRRTPLLF. Residues 29–31, 56–62, Arg79, Glu126, Phe173, and 269–271 contribute to the ATP site; these read TEI, EKVHGAN, and KFK. Lys57 serves as the catalytic N6-AMP-lysine intermediate.

It belongs to the RNA ligase 2 family. Component of the RNA editing complex, a 1600 kDa complex composed of at least 20 proteins.

The protein resides in the mitochondrion. The catalysed reaction is ATP + (ribonucleotide)n-3'-hydroxyl + 5'-phospho-(ribonucleotide)m = (ribonucleotide)n+m + AMP + diphosphate.. RNA editing in kinetoplastid mitochondria inserts and deletes uridylates at multiple sites in pre-mRNAs as directed by guide RNAs. The sequence is that of RNA-editing ligase 2, mitochondrial (REL2) from Trypanosoma brucei brucei (strain 927/4 GUTat10.1).